The chain runs to 173 residues: uncharacterized protein (173 aa).

It belongs to the ycf73 family.

It localises to the plastid. The protein localises to the chloroplast. This is an uncharacterized protein from Saccharum hybrid (Sugarcane).